The following is a 301-amino-acid chain: Probable 5-dehydro-4-deoxyglucarate dehydratase (301 aa).

Belongs to the DapA family.

It carries out the reaction 5-dehydro-4-deoxy-D-glucarate + H(+) = 2,5-dioxopentanoate + CO2 + H2O. It functions in the pathway carbohydrate acid metabolism; D-glucarate degradation; 2,5-dioxopentanoate from D-glucarate: step 2/2. This Chelativorans sp. (strain BNC1) protein is Probable 5-dehydro-4-deoxyglucarate dehydratase.